The chain runs to 93 residues: MDAIYFFLTIALAVGLTMLFTWFKKNNITLKWNEWVLGILGLLLALFAIQHTYASATYEFEYTSAWIVGVIVLLLAVVPLLFAARSVRRRVDK.

The next 3 helical transmembrane spans lie at 3-23 (AIYF…FTWF), 35-55 (WVLG…TYAS), and 64-84 (SAWI…LFAA).

This sequence belongs to the PceB family.

The protein resides in the cell membrane. May act as a membrane anchor for the chloroethene reductive dehalogenase VcrA. The protein is Probable chloroethene reductive dehalogenase membrane anchor protein of Dehalococcoides mccartyi (strain VS).